We begin with the raw amino-acid sequence, 841 residues long: Microcephalin (841 aa).

Residues 1 to 93 enclose the BRCT 1 domain; it reads MAAPILKDVV…AHIDESLFPA (93 aa). A phosphoserine mark is found at S278, S286, S295, and S332. The residue at position 334 (T334) is a Phosphothreonine. Disordered stretches follow at residues 340-375, 417-445, 481-507, and 562-593; these read GHLL…RKRS, PDNL…SCRS, SSPQ…SAPE, and VGLK…PRSV. Residues 342 to 358 show a composition bias toward basic residues; sequence LLIHSRPRSSSVKRKRV. The span at 433-445 shows a compositional bias: polar residues; sequence QLPSSPAQFSCRS. Residues 565–583 show a composition bias toward polar residues; the sequence is KSTQDKGTTSKISNSSEGE. 2 BRCT domains span residues 646–736 and 757–839; these read SGKG…SFEL and YRGT…NYLL.

In terms of assembly, interacts with CDC27 and maybe other components of the APC/C complex. Interacts with histone variant H2AX under DNA damage conditions.

It localises to the cytoplasm. The protein localises to the cytoskeleton. Its subcellular location is the microtubule organizing center. It is found in the centrosome. Implicated in chromosome condensation and DNA damage induced cellular responses. May play a role in neurogenesis and regulation of the size of the cerebral cortex. In Colobus guereza (Mantled guereza), this protein is Microcephalin.